The chain runs to 452 residues: Autophagy-related protein 32 (452 aa).

The segment at 1-28 (MSTKSQVTRRVRTSIATPEDGVHGNNQH) is disordered. A helical transmembrane segment spans residues 336–356 (WAIWTASFTIGIGIGCCISLM).

The protein belongs to the ATG32 family.

The protein resides in the mitochondrion outer membrane. It is found in the vacuole membrane. Its subcellular location is the preautophagosomal structure membrane. Functionally, mitophagy-specific receptor that recruits the autophagic machinery to mitochondria and regulates selective degradation of mitochondria. Mitophagy contributes to regulate mitochondrial quantity and quality by eliminating the mitochondria to a basal level to fulfill cellular energy requirements and preventing excess ROS production. Recruits ATG11 to the surface of mitochondria. Also promotes autophagy-dependent peroxisome degradation. This is Autophagy-related protein 32 (ATG32) from Eremothecium gossypii (strain ATCC 10895 / CBS 109.51 / FGSC 9923 / NRRL Y-1056) (Yeast).